The sequence spans 515 residues: Envelope glycoprotein (515 aa).

A signal peptide spans 1 to 33; that stretch reads MPKERRSRRRPQPIIRWVSLTLTLLALCRPIQT. At 34–435 the chain is on the extracellular side; sequence WRCSLSLGNQ…LGLTAWVRET (402 aa). Asn-129 and Asn-203 each carry an N-linked (GlcNAc...) asparagine; by host glycan. Positions 212 to 215 match the CXXC motif; it reads CAIC. 3 disulfide bridges follow: Cys-212-Cys-215, Cys-212-Cys-392, and Cys-384-Cys-391. 5 N-linked (GlcNAc...) asparagine; by host glycosylation sites follow: Asn-230, Asn-251, Asn-256, Asn-271, and Asn-287. Residues 304–324 form a fusion peptide region; it reads VAALTLGLALSVGLTGINVAV. 2 coiled-coil regions span residues 330 to 376 and 388 to 420; these read QRLT…WLYI and NEPC…DWQW. N-linked (GlcNAc...) asparagine; by host glycosylation is present at Asn-351. The tract at residues 365 to 381 is immunosuppression; that stretch reads AQNRRGLDWLYIRLGFQ. The CX6CC signature appears at 384 to 392; sequence CPTINEPCC. Asn-398 is a glycosylation site (N-linked (GlcNAc...) asparagine; by host). Residues 436–456 traverse the membrane as a helical segment; that stretch reads IHSVLSLFLLALFLLFLAPCL. Cys-455 carries S-palmitoyl cysteine; by host lipidation. Residues 457–515 lie on the Cytoplasmic side of the membrane; the sequence is IKCLTSRLLKLLRQAPHFPEISLTPKPDSDYQALLPSAPEIYSHLSPVKPDYINLRPCP.

The mature envelope protein (Env) consists of a trimer of SU-TM heterodimers attached by a labile interchain disulfide bond. Post-translationally, specific enzymatic cleavages in vivo yield mature proteins. Envelope glycoproteins are synthesized as an inactive precursor that is N-glycosylated and processed likely by host cell furin or by a furin-like protease in the Golgi to yield the mature SU and TM proteins. The cleavage site between SU and TM requires the minimal sequence [KR]-X-[KR]-R. In terms of processing, the CXXC motif is highly conserved across a broad range of retroviral envelope proteins. It is thought to participate in the formation of a labile disulfide bond possibly with the CX6CC motif present in the transmembrane protein. Isomerization of the intersubunit disulfide bond to an SU intrachain disulfide bond is thought to occur upon receptor recognition in order to allow membrane fusion. The transmembrane protein is palmitoylated.

It localises to the virion membrane. It is found in the host cell membrane. In terms of biological role, the surface protein (SU) attaches the virus to the host cell by binding to its receptor. This interaction triggers the refolding of the transmembrane protein (TM) and is thought to activate its fusogenic potential by unmasking its fusion peptide. Fusion occurs at the host cell plasma membrane. Functionally, the transmembrane protein (TM) acts as a class I viral fusion protein. Under the current model, the protein has at least 3 conformational states: pre-fusion native state, pre-hairpin intermediate state, and post-fusion hairpin state. During viral and target cell membrane fusion, the coiled coil regions (heptad repeats) assume a trimer-of-hairpins structure, positioning the fusion peptide in close proximity to the C-terminal region of the ectodomain. The formation of this structure appears to drive apposition and subsequent fusion of viral and target cell membranes. Membranes fusion leads to delivery of the nucleocapsid into the cytoplasm. In Bos taurus (Bovine), this protein is Envelope glycoprotein (env).